We begin with the raw amino-acid sequence, 162 residues long: MLWKANVWVLGEAAHGISGGTIIYQLLMFIILLALLRKFAWQPLMNIMKQREEHIANEIDQAEKRRQEAEKLLEEQRELMKQSRQDDEALIENARKLAQEQKEQIVASARGQAERVKEAAKKEIEREKEQAMAALREQVASLSVVIASKVIEKELTEQDPAS.

The chain crosses the membrane as a helical span at residues 16–36; that stretch reads GISGGTIIYQLLMFIILLALL.

It belongs to the ATPase B chain family. In terms of assembly, F-type ATPases have 2 components, F(1) - the catalytic core - and F(0) - the membrane proton channel. F(1) has five subunits: alpha(3), beta(3), gamma(1), delta(1), epsilon(1). F(0) has three main subunits: a(1), b(2) and c(10-14). The alpha and beta chains form an alternating ring which encloses part of the gamma chain. F(1) is attached to F(0) by a central stalk formed by the gamma and epsilon chains, while a peripheral stalk is formed by the delta and b chains.

It localises to the cell membrane. F(1)F(0) ATP synthase produces ATP from ADP in the presence of a proton or sodium gradient. F-type ATPases consist of two structural domains, F(1) containing the extramembraneous catalytic core and F(0) containing the membrane proton channel, linked together by a central stalk and a peripheral stalk. During catalysis, ATP synthesis in the catalytic domain of F(1) is coupled via a rotary mechanism of the central stalk subunits to proton translocation. Functionally, component of the F(0) channel, it forms part of the peripheral stalk, linking F(1) to F(0). The polypeptide is ATP synthase subunit b (Bacillus caldotenax).